A 486-amino-acid chain; its full sequence is Cardiolipin synthase A (486 aa).

Helical transmembrane passes span 3–23 (TVYTLVSWLAILGYWLLIAGV) and 38–58 (MAWLLIIYILPLVGIIAYLAV). PLD phosphodiesterase domains are found at residues 219–246 (MDLRQHRKMIMIDNYIAYTGSMNMVDPR) and 399–426 (EGGLLHTKSVLVDGELSLVGTVNLDMRS). Catalysis depends on residues histidine 224, lysine 226, aspartate 231, histidine 404, lysine 406, and aspartate 411.

Belongs to the phospholipase D family. Cardiolipin synthase subfamily. ClsA sub-subfamily.

Its subcellular location is the cell inner membrane. It catalyses the reaction 2 a 1,2-diacyl-sn-glycero-3-phospho-(1'-sn-glycerol) = a cardiolipin + glycerol. Catalyzes the reversible phosphatidyl group transfer from one phosphatidylglycerol molecule to another to form cardiolipin (CL) (diphosphatidylglycerol) and glycerol. This chain is Cardiolipin synthase A, found in Escherichia coli O157:H7 (strain EC4115 / EHEC).